Reading from the N-terminus, the 331-residue chain is Pantothenate kinase (331 aa).

Residue 109–116 coordinates ATP; that stretch reads GSVAVGKS.

The protein belongs to the prokaryotic pantothenate kinase family.

It localises to the cytoplasm. It catalyses the reaction (R)-pantothenate + ATP = (R)-4'-phosphopantothenate + ADP + H(+). It functions in the pathway cofactor biosynthesis; coenzyme A biosynthesis; CoA from (R)-pantothenate: step 1/5. The sequence is that of Pantothenate kinase from Rhizobium leguminosarum bv. trifolii (strain WSM2304).